The primary structure comprises 341 residues: MVGEMETKEKPKPTPDYLMQLMNDKKLMSSLPNFCGIFNHLERLLDEEISRVRKDMYNDTLNGSTEKRSAELPDAVGPIVQLQEKLYVPVKEYPDFNFVGRILGPRGLTAKQLEAETGCKIMVRGKGSMRDKKKEEQNRGKPNWEHLNEDLHVLITVEDAQNRAEIKLKRAVEEVKKLLVPAAEGEDSLKKMQLMELAILNGTYRDANIKSPALAFSLAATAQAAPRIITGPAPVLPPAALRTPTPAGPTIMPLIRQIQTAVMPNGTPHPTAAIVPPGPEAGLIYTPYEYPYTLAPATSILEYPIEPSGVLGAVATKVRRHDMRVHPYQRIVTADRAATGN.

Residues P11–L82 are qua1 domain; involved in homodimerization. One can recognise a KH domain in the interval Y87–V153. The tract at residues A182–A213 is qua2 domain; involved in RNA binding. At S188 the chain carries Phosphoserine. Omega-N-methylarginine is present on R227. R242 is modified (asymmetric dimethylarginine; by CARM1; alternate). R242 is modified (omega-N-methylarginine; alternate). R256 is subject to Omega-N-methylarginine. The SH3-binding motif lies at P276–P279. The short motif at R324–R330 is the Nuclear localization signal element.

It belongs to the quaking family. Homodimer; does not require RNA to homodimerize. Able to heterodimerize with BICC1. Post-translationally, methylated by PRMT1. Tyrosine phosphorylated at its C-terminus, probably by FYN. Phosphorylation leads to decreased mRNA-binding affinity, affecting transport and/or stabilization of MBP mRNA. In terms of processing, ubiquitinated by RNF6 in macrophages, leading to its degradation.

Its subcellular location is the nucleus. The protein resides in the cytoplasm. In terms of biological role, RNA reader protein, which recognizes and binds specific RNAs, thereby regulating RNA metabolic processes, such as pre-mRNA splicing, circular RNA (circRNA) formation, mRNA export, mRNA stability and/or translation. Involved in various cellular processes, such as mRNA storage into stress granules, apoptosis, lipid deposition, interferon response, glial cell fate and development. Binds to the 5'-NACUAAY-N(1,20)-UAAY-3' RNA core sequence. Acts as a mRNA modification reader that specifically recognizes and binds mRNA transcripts modified by internal N(7)-methylguanine (m7G). Promotes the formation of circular RNAs (circRNAs) during the epithelial to mesenchymal transition and in cardiomyocytes: acts by binding to sites flanking circRNA-forming exons. CircRNAs are produced by back-splicing circularization of pre-mRNAs. Plays a central role in myelinization via 3 distinct mechanisms. First, acts by protecting and promoting stability of target mRNAs such as MBP, SIRT2 and CDKN1B, which promotes oligodendrocyte differentiation. Second, participates in mRNA transport by regulating the nuclear export of MBP mRNA. Finally, indirectly regulates mRNA splicing of MAG pre-mRNA during oligodendrocyte differentiation by acting as a negative regulator of MAG exon 12 alternative splicing: acts by binding to HNRNPA1 mRNA splicing factor, preventing its translation. Involved in microglia differentiation and remyelination by regulating microexon alternative splicing of the Rho GTPase pathway. Involved in macrophage differentiation: promotes monocyte differentiation by regulating pre-mRNA splicing in naive peripheral blood monocytes. Acts as an important regulator of muscle development: required for the contractile function of cardiomyocytes by regulating alternative splicing of cardiomyocyte transcripts. Acts as a negative regulator of thermogenesis by decreasing stability, nuclear export and translation of mRNAs encoding PPARGC1A and UCP1. Also required for visceral endoderm function and blood vessel development. May also play a role in smooth muscle development. In addition to its RNA-binding activity, also acts as a nuclear transcription coactivator for SREBF2/SREBP2. The sequence is that of KH domain-containing RNA-binding protein QKI from Bos taurus (Bovine).